A 420-amino-acid chain; its full sequence is uncharacterized protein (420 aa).

The next 6 membrane-spanning stretches (helical) occupy residues 26–46 (IFLLLVILVFVPIGFVFQSVI), 66–86 (SAIKSITLLFLLLLFVNWFTF), 231–251 (VILAFYVTQKILIMILFATVL), 276–296 (IPVNVFAMTIAIAIRFVPSLL), 317–337 (GFLVKMRSLSSLVVPMVSIAF), and 369–389 (IDILALFLVFAWFVVIIFLTI).

The protein belongs to the CbiQ family.

It is found in the cell membrane. This is an uncharacterized protein from Mycoplasma genitalium (strain ATCC 33530 / DSM 19775 / NCTC 10195 / G37) (Mycoplasmoides genitalium).